Reading from the N-terminus, the 486-residue chain is B-type cell cycle switch protein ccs52B (486 aa).

Positions 24–36 (RLETLSTPPSSAS) match the PEST motif motif. Residues 27 to 36 (TLSTPPSSAS) are compositionally biased toward polar residues. The interval 27–57 (TLSTPPSSASPRAISNLSSTPSPSKSSKCSD) is disordered. Over residues 41-53 (SNLSSTPSPSKSS) the composition is skewed to low complexity. Positions 57–63 (DRFIPCR) match the C-box motif. The CSM motif signature appears at 87 to 98 (AYNRLLKSELFG). WD repeat units follow at residues 177 to 214 (QDDF…VTKL), 218 to 257 (GPYD…KVRT), 260 to 297 (GHQT…DFIG), 301 to 340 (GHKS…PTLR), 343 to 385 (EHTA…QLNS), 387 to 428 (DTGS…KVAT), and 431 to 470 (GHSM…KTPA).

This sequence belongs to the WD repeat CDC20/Fizzy family. In terms of tissue distribution, mostly expressed in shoot apices and, to a lower extent, in roots, especially in root tips, and in hypocotyls. Expressed in nodulation-competent root zone but not in the nodules.

Its pathway is protein modification; protein ubiquitination. Its function is as follows. Component of the anaphase promoting complex/cyclosome (APC/C), a cell cycle-regulated E3 ubiquitin-protein ligase complex that controls progression through mitosis and the G1 phase of the cell cycle. The sequence is that of B-type cell cycle switch protein ccs52B from Medicago truncatula (Barrel medic).